Consider the following 194-residue polypeptide: MHLAVFGGTFDPPHNGHLAMALFARELLPADRILISVSDNPLKPACGASDRQRLDMAELLSLEINRTGMNAEVTGWELQQPRPSYTVDLLRFVRSSHPDANLTLIVGEDSYQDFPRWRDPEGIFALADVAVFRRRGEDESDEIAGDSRVRCIAFDAPVSSTMVREFSATGKSLRGLVPETVMQYILSEGLYREA.

This sequence belongs to the NadD family.

The enzyme catalyses nicotinate beta-D-ribonucleotide + ATP + H(+) = deamido-NAD(+) + diphosphate. Its pathway is cofactor biosynthesis; NAD(+) biosynthesis; deamido-NAD(+) from nicotinate D-ribonucleotide: step 1/1. Catalyzes the reversible adenylation of nicotinate mononucleotide (NaMN) to nicotinic acid adenine dinucleotide (NaAD). The protein is Probable nicotinate-nucleotide adenylyltransferase of Chlorobium luteolum (strain DSM 273 / BCRC 81028 / 2530) (Pelodictyon luteolum).